The following is a 194-amino-acid chain: Thymidine kinase (194 aa).

Residues 15-22 (GSMFSGKS) and 88-91 (DEVQ) each bind ATP. E89 serves as the catalytic Proton acceptor. 4 residues coordinate Zn(2+): C145, C148, C183, and C186.

The protein belongs to the thymidine kinase family. In terms of assembly, homotetramer.

Its subcellular location is the cytoplasm. It carries out the reaction thymidine + ATP = dTMP + ADP + H(+). This is Thymidine kinase from Bacillus anthracis (strain A0248).